A 101-amino-acid chain; its full sequence is Large ribosomal subunit protein uL24 (101 aa).

This sequence belongs to the universal ribosomal protein uL24 family. Part of the 50S ribosomal subunit.

In terms of biological role, one of two assembly initiator proteins, it binds directly to the 5'-end of the 23S rRNA, where it nucleates assembly of the 50S subunit. Functionally, one of the proteins that surrounds the polypeptide exit tunnel on the outside of the subunit. The protein is Large ribosomal subunit protein uL24 of Streptococcus pyogenes serotype M1.